Consider the following 1193-residue polypeptide: DNA-directed RNA polymerase subunit beta (1193 aa).

Residues I1152–E1161 are compositionally biased toward acidic residues. A disordered region spans residues I1152–E1193. Over residues D1184–E1193 the composition is skewed to basic and acidic residues.

This sequence belongs to the RNA polymerase beta chain family. In terms of assembly, the RNAP catalytic core consists of 2 alpha, 1 beta, 1 beta' and 1 omega subunit. When a sigma factor is associated with the core the holoenzyme is formed, which can initiate transcription.

It carries out the reaction RNA(n) + a ribonucleoside 5'-triphosphate = RNA(n+1) + diphosphate. Functionally, DNA-dependent RNA polymerase catalyzes the transcription of DNA into RNA using the four ribonucleoside triphosphates as substrates. The sequence is that of DNA-directed RNA polymerase subunit beta from Bacillus pumilus (strain SAFR-032).